We begin with the raw amino-acid sequence, 138 residues long: ATP synthase epsilon chain (138 aa).

The protein belongs to the ATPase epsilon chain family. In terms of assembly, F-type ATPases have 2 components, CF(1) - the catalytic core - and CF(0) - the membrane proton channel. CF(1) has five subunits: alpha(3), beta(3), gamma(1), delta(1), epsilon(1). CF(0) has three main subunits: a, b and c.

Its subcellular location is the cell inner membrane. Produces ATP from ADP in the presence of a proton gradient across the membrane. The protein is ATP synthase epsilon chain of Geobacter sp. (strain M21).